Here is a 474-residue protein sequence, read N- to C-terminus: Shufflon protein A (474 aa).

The interval 1–361 (MKKYDRGWAS…TGAILSCQSG (361 aa)) is constant region. The interval 362–474 (TWKTSGSLNG…GVFSVFGYQT (113 aa)) is variable region.

In Escherichia coli, this protein is Shufflon protein A.